Here is a 607-residue protein sequence, read N- to C-terminus: UvrABC system protein C (607 aa).

A GIY-YIG domain is found at 11–89; it reads CKPGVYRFED…IKEFAPPCNV (79 aa). The region spanning 201 to 236 is the UVR domain; that stretch reads SSLLESLKKKMLKASKNKEYEEAAILRDKIQAAQTV.

This sequence belongs to the UvrC family. Interacts with UvrB in an incision complex.

It localises to the cytoplasm. Functionally, the UvrABC repair system catalyzes the recognition and processing of DNA lesions. UvrC both incises the 5' and 3' sides of the lesion. The N-terminal half is responsible for the 3' incision and the C-terminal half is responsible for the 5' incision. The chain is UvrABC system protein C from Tropheryma whipplei (strain TW08/27) (Whipple's bacillus).